Here is a 213-residue protein sequence, read N- to C-terminus: Leucyl/phenylalanyl-tRNA--protein transferase (213 aa).

The protein belongs to the L/F-transferase family.

It localises to the cytoplasm. It catalyses the reaction N-terminal L-lysyl-[protein] + L-leucyl-tRNA(Leu) = N-terminal L-leucyl-L-lysyl-[protein] + tRNA(Leu) + H(+). It carries out the reaction N-terminal L-arginyl-[protein] + L-leucyl-tRNA(Leu) = N-terminal L-leucyl-L-arginyl-[protein] + tRNA(Leu) + H(+). The catalysed reaction is L-phenylalanyl-tRNA(Phe) + an N-terminal L-alpha-aminoacyl-[protein] = an N-terminal L-phenylalanyl-L-alpha-aminoacyl-[protein] + tRNA(Phe). Functionally, functions in the N-end rule pathway of protein degradation where it conjugates Leu, Phe and, less efficiently, Met from aminoacyl-tRNAs to the N-termini of proteins containing an N-terminal arginine or lysine. The polypeptide is Leucyl/phenylalanyl-tRNA--protein transferase (Campylobacter lari (strain RM2100 / D67 / ATCC BAA-1060)).